The chain runs to 253 residues: Triosephosphate isomerase (253 aa).

9-11 provides a ligand contact to substrate; sequence NWK. His-95 functions as the Electrophile in the catalytic mechanism. Catalysis depends on Glu-167, which acts as the Proton acceptor. Substrate-binding positions include Gly-173, Ser-213, and 234 to 235; that span reads GG. The residue at position 213 (Ser-213) is a Phosphoserine.

This sequence belongs to the triosephosphate isomerase family. As to quaternary structure, homodimer.

Its subcellular location is the cytoplasm. The catalysed reaction is D-glyceraldehyde 3-phosphate = dihydroxyacetone phosphate. The protein operates within carbohydrate biosynthesis; gluconeogenesis. It participates in carbohydrate degradation; glycolysis; D-glyceraldehyde 3-phosphate from glycerone phosphate: step 1/1. Its function is as follows. Involved in the gluconeogenesis. Catalyzes stereospecifically the conversion of dihydroxyacetone phosphate (DHAP) to D-glyceraldehyde-3-phosphate (G3P). The chain is Triosephosphate isomerase from Bacillus subtilis (strain 168).